A 1325-amino-acid polypeptide reads, in one-letter code: Nephrocystin-3 (1325 aa).

The tract at residues 1–20 (MGTASSLVSPTGGEVIEDTY) is disordered. Gly2 is lipidated: N-myristoyl glycine. A coiled-coil region spans residues 107–203 (SMGRREAKLD…QRLQAQGIQV (97 aa)). TPR repeat units lie at residues 467–500 (TPEE…AHEL), 881–914 (CLLN…KGAM), 916–937 (TEYF…MLCL), 938–971 (ADLY…RETA), 980–1013 (AQSL…SENA), 1022–1055 (AREL…RQQA), 1088–1121 (ARTL…RERV), 1130–1163 (AQSL…RRRA), 1172–1205 (AYTV…RQKS), 1214–1247 (ATAL…YEDS), and 1256–1289 (GETL…KEAE). Residues 1293–1325 (LGGKAPSRQSSSGDTFLFKTTHSPNVFLPQGQS) form a disordered region. The segment covering 1299-1325 (SRQSSSGDTFLFKTTHSPNVFLPQGQS) has biased composition (polar residues).

In terms of assembly, interacts with NPHP1 and INVS/NPHP2. Interacts (when myristoylated) with UNC119 and UNC119B; interaction is required for localization to cilium. Interacts with CEP164. Component of a complex containing at least ANKS6, INVS, NEK8 and NPHP3. ANKS6 may organize complex assembly by linking INVS and NPHP3 to NEK8 and INVS may target the complex to the proximal ciliary axoneme.

Its subcellular location is the cell projection. The protein resides in the cilium. Functionally, required for normal ciliary development and function. Inhibits disheveled-1-induced canonical Wnt-signaling activity and may also play a role in the control of non-canonical Wnt signaling that regulates planar cell polarity. Probably acts as a molecular switch between different Wnt signaling pathways. Required for proper convergent extension cell movements. The protein is Nephrocystin-3 (Nphp3) of Mus musculus (Mouse).